We begin with the raw amino-acid sequence, 752 residues long: MSEVKYFEDTDYGVIEAIATIDNGDFGTRTIRFETGQLARQADGAVTTYLDDETMLLATTTASNQPREGLDFFPLTVDVEERMYAAGRIPGSFFRREGRPSTEAILACRLIDRPLRPTFVKGLRNEVQVIITVMSVSPEDSYDVVAINGASAATRISGLPVSGAVGGVRMALIADENHPEGQWVAFPTAEQQKASVFELVVAGRLVERKRGNKTFSDVAVMMVEAGASENVVERIKEGAPAPTEKTVAEGLEAAKPFIDLLCRAQEGLAQRVAKETREFPLFPAYSDEVYAAVEKQASKKLTQLMTIKGKNERENATNDFMVEVEEKLIGRFEDDLGAAVASKEIRAAYNSLMKKIVRGKILSEGFRIDGRGVSDIRDLGVEVELIPRAHGSSLFERGETQILGVTTLDMLKMEQHIDSLAPVDTKRYMHHYNFPPYSTGETGRVGSPKRREIGHGALAERAVLPVIPSREDFPYAIRQVSEALGSNGSTSMGSVCASTLSLYNAGVPLKAPVAGIAMGLVSDEVDGKTEYVALTDILGAEDAFGDMDFKVAGTAEFITALQLDTKLDGIPSKVLADALEQARDARLAILETMAEVIDGPDEMSQFAPRITTIQIPVSKIGELIGPKGKNINALTEETGANISIEDDGTVFISAASGEAAEAAIEKINALANPQLPKVGERFLGTVVKATAFGAFVSLLPGRDGLVHISKLGNGKRVEKVEDVVTVGEKLQVEIADIDNRGKISLVPVVEED.

2 residues coordinate Mg(2+): aspartate 542 and aspartate 548. Residues proline 608–isoleucine 667 enclose the KH domain. Residues glycine 679–valine 748 enclose the S1 motif domain.

It belongs to the polyribonucleotide nucleotidyltransferase family. Mg(2+) is required as a cofactor.

It localises to the cytoplasm. The catalysed reaction is RNA(n+1) + phosphate = RNA(n) + a ribonucleoside 5'-diphosphate. In terms of biological role, involved in mRNA degradation. Catalyzes the phosphorolysis of single-stranded polyribonucleotides processively in the 3'- to 5'-direction. The sequence is that of Polyribonucleotide nucleotidyltransferase from Corynebacterium efficiens (strain DSM 44549 / YS-314 / AJ 12310 / JCM 11189 / NBRC 100395).